A 317-amino-acid polypeptide reads, in one-letter code: ATP synthase gamma chain (317 aa).

Belongs to the ATPase gamma chain family. F-type ATPases have 2 components, CF(1) - the catalytic core - and CF(0) - the membrane proton channel. CF(1) has five subunits: alpha(3), beta(3), gamma(1), delta(1), epsilon(1). CF(0) has three main subunits: a, b and c.

It is found in the cellular thylakoid membrane. In terms of biological role, produces ATP from ADP in the presence of a proton gradient across the membrane. The gamma chain is believed to be important in regulating ATPase activity and the flow of protons through the CF(0) complex. This Synechococcus sp. (strain CC9902) protein is ATP synthase gamma chain.